Here is a 177-residue protein sequence, read N- to C-terminus: MTEMVPAWVEGRLMPVEKLEAHQRGLRHMAISVFVMAGEAVLIQRRAAGKYHTPGLWANTCCTHPRWGEEAADCAVRRLREELGITGLVTVFADRVEYRADVGNGLTEHEVVDIFVAEAPSDLPVNPDPEEVWETRWVDLTDLAREVKEHPERFTPWLRIYLAEHMERIFGKLRVVQ.

His-22 and His-28 together coordinate Mn(2+). Residues 26 to 160 enclose the Nudix hydrolase domain; sequence LRHMAISVFV…PERFTPWLRI (135 aa). Cys-62 is a catalytic residue. Residue His-64 coordinates Mn(2+). Glu-82 is a binding site for Mg(2+). Glu-108 and Glu-110 together coordinate Mn(2+). Glu-110 is an active-site residue.

The protein belongs to the IPP isomerase type 1 family. It depends on Mg(2+) as a cofactor. The cofactor is Mn(2+).

It is found in the cytoplasm. It carries out the reaction isopentenyl diphosphate = dimethylallyl diphosphate. It functions in the pathway isoprenoid biosynthesis; dimethylallyl diphosphate biosynthesis; dimethylallyl diphosphate from isopentenyl diphosphate: step 1/1. It participates in porphyrin-containing compound metabolism; chlorophyll biosynthesis. Catalyzes the 1,3-allylic rearrangement of the homoallylic substrate isopentenyl (IPP) to its highly electrophilic allylic isomer, dimethylallyl diphosphate (DMAPP). The chain is Isopentenyl-diphosphate Delta-isomerase from Cereibacter sphaeroides (strain ATCC 17029 / ATH 2.4.9) (Rhodobacter sphaeroides).